Consider the following 132-residue polypeptide: Large-conductance mechanosensitive channel (132 aa).

The next 3 helical transmembrane spans lie at 8 to 28 (FALKGNVMDLAVGVVIGGAFG), 30 to 50 (IVSSLVSDVIMPLVGLLLGGV), and 67 to 87 (GAFIQTVVDFLIIAFSIFLFI).

It belongs to the MscL family. As to quaternary structure, homopentamer.

Its subcellular location is the cell membrane. Channel that opens in response to stretch forces in the membrane lipid bilayer. May participate in the regulation of osmotic pressure changes within the cell. This is Large-conductance mechanosensitive channel from Bacillus cytotoxicus (strain DSM 22905 / CIP 110041 / 391-98 / NVH 391-98).